Here is a 427-residue protein sequence, read N- to C-terminus: Glutamate-1-semialdehyde 2,1-aminomutase (427 aa).

Lysine 267 carries the N6-(pyridoxal phosphate)lysine modification.

Belongs to the class-III pyridoxal-phosphate-dependent aminotransferase family. HemL subfamily. In terms of assembly, homodimer. It depends on pyridoxal 5'-phosphate as a cofactor.

It is found in the cytoplasm. The catalysed reaction is (S)-4-amino-5-oxopentanoate = 5-aminolevulinate. Its pathway is porphyrin-containing compound metabolism; protoporphyrin-IX biosynthesis; 5-aminolevulinate from L-glutamyl-tRNA(Glu): step 2/2. The protein is Glutamate-1-semialdehyde 2,1-aminomutase of Geobacter sulfurreducens (strain ATCC 51573 / DSM 12127 / PCA).